Here is a 299-residue protein sequence, read N- to C-terminus: Protease HtpX homolog (299 aa).

Transmembrane regions (helical) follow at residues 15–35 and 39–59; these read ILLLVFFLLLALVGYAVGYLF and GLGGLVIALIIGFIYALSMIF. Position 143 (His143) interacts with Zn(2+). Residue Glu144 is part of the active site. His147 is a Zn(2+) binding site. 2 helical membrane passes run 158 to 178 and 198 to 218; these read IAVALASAITMLSGMAGRMMW and IIMLVVSLLAIVLAPLAATLV. A Zn(2+)-binding site is contributed by Glu227.

The protein belongs to the peptidase M48B family. Zn(2+) is required as a cofactor.

The protein resides in the cell membrane. This chain is Protease HtpX homolog, found in Streptococcus pneumoniae (strain P1031).